The chain runs to 276 residues: 4-deoxy-L-threo-5-hexosulose-uronate ketol-isomerase (276 aa).

The Zn(2+) site is built by H194, H196, E201, and H243.

It belongs to the KduI family. The cofactor is Zn(2+).

It carries out the reaction 5-dehydro-4-deoxy-D-glucuronate = 3-deoxy-D-glycero-2,5-hexodiulosonate. The protein operates within glycan metabolism; pectin degradation; 2-dehydro-3-deoxy-D-gluconate from pectin: step 4/5. Catalyzes the isomerization of 5-dehydro-4-deoxy-D-glucuronate to 3-deoxy-D-glycero-2,5-hexodiulosonate. The sequence is that of 4-deoxy-L-threo-5-hexosulose-uronate ketol-isomerase from Halalkalibacterium halodurans (strain ATCC BAA-125 / DSM 18197 / FERM 7344 / JCM 9153 / C-125) (Bacillus halodurans).